The chain runs to 199 residues: Peroxiredoxin 2 (199 aa).

The 159-residue stretch at 8–166 (AFIGQPAPNF…TLRLIQAFQF (159 aa)) folds into the Thioredoxin domain. Cys53 acts as the Cysteine sulfenic acid (-SOH) intermediate in catalysis.

It belongs to the peroxiredoxin family. AhpC/Prx1 subfamily. As to quaternary structure, homodimer; disulfide-linked, upon oxidation.

The enzyme catalyses a hydroperoxide + [thioredoxin]-dithiol = an alcohol + [thioredoxin]-disulfide + H2O. Its function is as follows. Thiol-specific peroxidase that catalyzes the reduction of hydrogen peroxide and organic hydroperoxides to water and alcohols, respectively. Plays a role in cell protection against oxidative stress by detoxifying peroxides and as sensor of hydrogen peroxide-mediated signaling events. This is Peroxiredoxin 2 (tsa-2) from Brugia malayi (Filarial nematode worm).